Reading from the N-terminus, the 165-residue chain is Growth arrest and DNA damage-inducible protein GADD45 alpha (165 aa).

The residue at position 2 (Thr-2) is a Phosphothreonine.

It belongs to the GADD45 family. As to quaternary structure, interacts with MAPK14. Predominantly monomeric but also forms dimers and other oligomers as concentration increases. Interacts with GADD45GIP1. Interacts weakly with PCNA. Interacts with AURKA, likely to compete with dimerization.

It localises to the nucleus. Functionally, in T-cells, functions as a regulator of p38 MAPKs by inhibiting p88 phosphorylation and activity. Might affect PCNA interaction with some CDK (cell division protein kinase) complexes; stimulates DNA excision repair in vitro and inhibits entry of cells into S phase. This is Growth arrest and DNA damage-inducible protein GADD45 alpha (GADD45A) from Homo sapiens (Human).